The chain runs to 630 residues: MRKWRIEDSEELYNITGWGTSYFGINDKGHVVVTPRKDGVEVDLKELVDELQLRDVAAPMLVRFPDILDNRIEKIANCFKQASDEYGYKAQNFIIYPIKVNQMRPVVEEIISHGKKFNLGLEAGSKPELHAVIAVNTDSDSLIICNGYKDESYIELALLAQKMGKRIFLVVEKMNELRLIAKMAKQLNVRPNIGIRIKLASSGSGKWEDSGGDASKFGLTSSELLEALDFLEKKDMKDCLKLIHFHIGSQVTKIRRIKTALREASQFYVQLHVMGFNVEFVDIGGGLGVDYDGTRSANSESSVNYSIQEYVNDSISTLVDASDKNGIPHPNIITESGRSLTAHHSVLIFEVLETATLPEMDEDFEVGENDHELVHELYEIWDNLNQSRMVEAWHDAQQIREEALDLFSHGIVDLKTRAQIERLYWSVTREINQIASGLKHAPDEFRKLDKLLADKYFCNFSLFQSLPDSWAIDQIFPIMPIQRLDEKPDRNATLQDITCDSDGKIANFISTRYVSHDLPVHSLKGKDAYYIGVFLVGAYQEILGDMHNLFGDTNAVHVTVDDKGYSIDQVIDGETVAEVLDYVQYNPKKLVRTLETWVTKSVKEGRISVEEGKEFLSNYRSGLYGYTYLE.

Position 99 is an N6-(pyridoxal phosphate)lysine (K99). 281-291 provides a ligand contact to substrate; the sequence is VDIGGGLGVDY.

It belongs to the Orn/Lys/Arg decarboxylase class-II family. SpeA subfamily. Requires Mg(2+) as cofactor. It depends on pyridoxal 5'-phosphate as a cofactor.

The enzyme catalyses L-arginine + H(+) = agmatine + CO2. The protein operates within amine and polyamine biosynthesis; agmatine biosynthesis; agmatine from L-arginine: step 1/1. Its function is as follows. Catalyzes the biosynthesis of agmatine from arginine. The chain is Biosynthetic arginine decarboxylase from Phocaeicola vulgatus (strain ATCC 8482 / DSM 1447 / JCM 5826 / CCUG 4940 / NBRC 14291 / NCTC 11154) (Bacteroides vulgatus).